Consider the following 163-residue polypeptide: 18 kDa protein (163 aa).

In Mus musculus (Mouse), this protein is 18 kDa protein.